A 393-amino-acid polypeptide reads, in one-letter code: MSENRAPIYLDNNATTRTDPSVVQTMLPFFTEQFGNASSAHAFGNEAAIAVRQARRSLSGLLGSAYDHEIVFTSGGTEANNAAILSALATQEGRDEVVTTSVEHSAVLALTEQLAARGVKTRIIAVDACGRLDIEAFRCALGPRTAIASVMWANNETGTIFPVKCLAGWTREAGALFHTDAVQAIGKVRLNLKDSTIDMLSLSAHKLHGPKGVGALYLRKGTKFQPLICGGSQERGRRAGTENIPGIVGLGKAAELAAERLEPERIRIGALRDRLEQGILRNGECVVLGDIRNRLANTTNIAFDHLEGEAIAHRLNRAGIAVSLGSACRSGSMQPSHVLRAMQVPAWRMHGAVRFSLSRETSLAEVDEAVCAVSDIVTRMRASSRATVREQTS.

Pyridoxal 5'-phosphate-binding positions include 76-77 (GT), Asn-155, Gln-183, and 203-205 (SAH). N6-(pyridoxal phosphate)lysine is present on Lys-206. Thr-241 contacts pyridoxal 5'-phosphate. The active-site Cysteine persulfide intermediate is the Cys-328. Residue Cys-328 participates in [2Fe-2S] cluster binding.

The protein belongs to the class-V pyridoxal-phosphate-dependent aminotransferase family. NifS/IscS subfamily. As to quaternary structure, homodimer. Requires pyridoxal 5'-phosphate as cofactor.

The enzyme catalyses (sulfur carrier)-H + L-cysteine = (sulfur carrier)-SH + L-alanine. Its function is as follows. Catalyzes the removal of elemental sulfur atoms from cysteine to produce alanine. Seems to participate in the biosynthesis of the nitrogenase metalloclusters by providing the inorganic sulfur required for the Fe-S core formation. This chain is Cysteine desulfurase, found in Bradyrhizobium diazoefficiens (strain JCM 10833 / BCRC 13528 / IAM 13628 / NBRC 14792 / USDA 110).